We begin with the raw amino-acid sequence, 245 residues long: Enolase-phosphatase E1 (245 aa).

The protein belongs to the HAD-like hydrolase superfamily. MasA/MtnC family. In terms of assembly, monomer. Mg(2+) is required as a cofactor.

It carries out the reaction 5-methylsulfanyl-2,3-dioxopentyl phosphate + H2O = 1,2-dihydroxy-5-(methylsulfanyl)pent-1-en-3-one + phosphate. The protein operates within amino-acid biosynthesis; L-methionine biosynthesis via salvage pathway; L-methionine from S-methyl-5-thio-alpha-D-ribose 1-phosphate: step 3/6. Its pathway is amino-acid biosynthesis; L-methionine biosynthesis via salvage pathway; L-methionine from S-methyl-5-thio-alpha-D-ribose 1-phosphate: step 4/6. Its function is as follows. Bifunctional enzyme that catalyzes the enolization of 2,3-diketo-5-methylthiopentyl-1-phosphate (DK-MTP-1-P) into the intermediate 2-hydroxy-3-keto-5-methylthiopentenyl-1-phosphate (HK-MTPenyl-1-P), which is then dephosphorylated to form the acireductone 1,2-dihydroxy-3-keto-5-methylthiopentene (DHK-MTPene). The protein is Enolase-phosphatase E1 of Prochlorococcus marinus (strain MIT 9313).